Reading from the N-terminus, the 920-residue chain is Isoleucine--tRNA ligase (920 aa).

Positions 57 to 67 match the 'HIGH' region motif; sequence PYANGDIHLGH. Glu-560 provides a ligand contact to L-isoleucyl-5'-AMP. The 'KMSKS' region signature appears at 601–605; sequence KMSKS. Residue Lys-604 coordinates ATP. The Zn(2+) site is built by Cys-890, Cys-893, Cys-910, and Cys-913.

Belongs to the class-I aminoacyl-tRNA synthetase family. IleS type 1 subfamily. As to quaternary structure, monomer. Zn(2+) is required as a cofactor.

The protein localises to the cytoplasm. It catalyses the reaction tRNA(Ile) + L-isoleucine + ATP = L-isoleucyl-tRNA(Ile) + AMP + diphosphate. Catalyzes the attachment of isoleucine to tRNA(Ile). As IleRS can inadvertently accommodate and process structurally similar amino acids such as valine, to avoid such errors it has two additional distinct tRNA(Ile)-dependent editing activities. One activity is designated as 'pretransfer' editing and involves the hydrolysis of activated Val-AMP. The other activity is designated 'posttransfer' editing and involves deacylation of mischarged Val-tRNA(Ile). This is Isoleucine--tRNA ligase from Caldicellulosiruptor bescii (strain ATCC BAA-1888 / DSM 6725 / KCTC 15123 / Z-1320) (Anaerocellum thermophilum).